The following is a 150-amino-acid chain: 3-hydroxyacyl-[acyl-carrier-protein] dehydratase FabZ (150 aa).

His52 is a catalytic residue.

The protein belongs to the thioester dehydratase family. FabZ subfamily.

It is found in the cytoplasm. It catalyses the reaction a (3R)-hydroxyacyl-[ACP] = a (2E)-enoyl-[ACP] + H2O. In terms of biological role, involved in unsaturated fatty acids biosynthesis. Catalyzes the dehydration of short chain beta-hydroxyacyl-ACPs and long chain saturated and unsaturated beta-hydroxyacyl-ACPs. This Albidiferax ferrireducens (strain ATCC BAA-621 / DSM 15236 / T118) (Rhodoferax ferrireducens) protein is 3-hydroxyacyl-[acyl-carrier-protein] dehydratase FabZ.